The following is a 162-amino-acid chain: Endoribonuclease YbeY (162 aa).

Zn(2+) is bound by residues His-117, His-121, and His-127.

Belongs to the endoribonuclease YbeY family. Zn(2+) is required as a cofactor.

It localises to the cytoplasm. Single strand-specific metallo-endoribonuclease involved in late-stage 70S ribosome quality control and in maturation of the 3' terminus of the 16S rRNA. The sequence is that of Endoribonuclease YbeY from Francisella tularensis subsp. mediasiatica (strain FSC147).